Here is a 227-residue protein sequence, read N- to C-terminus: Ornithine decarboxylase antizyme 1 (227 aa).

Belongs to the ODC antizyme family. Interacts with ODC1 and thereby sterically blocks ODC homodimerization. Forms a ternary complex with PSMB4 and OAZ1 before PSMB4 is incorporated into the 20S proteasome. Interacts with AZIN2; this interaction disrupts the interaction between the antizyme and ODC1. Interacts with FAM171A1.

Its function is as follows. Ornithine decarboxylase (ODC) antizyme protein that negatively regulates ODC activity and intracellular polyamine biosynthesis and uptake in response to increased intracellular polyamine levels. Binds to ODC monomers, inhibiting the assembly of the functional ODC homodimer, and targets the monomers for ubiquitin-independent proteolytic destruction by the 26S proteasome. Triggers ODC degradation by inducing the exposure of a cryptic proteasome-interacting surface of ODC. Stabilizes AZIN2 by interfering with its ubiquitination. Also inhibits cellular uptake of polyamines by inactivating the polyamine uptake transporter. SMAD1/OAZ1/PSMB4 complex mediates the degradation of the CREBBP/EP300 repressor SNIP1. Involved in the translocation of AZIN2 from ER-Golgi intermediate compartment (ERGIC) to the cytosol. This chain is Ornithine decarboxylase antizyme 1 (Oaz1), found in Rattus norvegicus (Rat).